The following is a 609-amino-acid chain: Glutamine--fructose-6-phosphate aminotransferase [isomerizing] (609 aa).

Cysteine 2 functions as the Nucleophile; for GATase activity in the catalytic mechanism. Residues 2-217 (CGIVGYIGRR…EGWLAELTPE (216 aa)) enclose the Glutamine amidotransferase type-2 domain. 2 consecutive SIS domains span residues 286–425 (SAAE…QNGR) and 458–599 (AAEA…VDKP). Residue lysine 604 is the For Fru-6P isomerization activity of the active site.

Homodimer.

Its subcellular location is the cytoplasm. The catalysed reaction is D-fructose 6-phosphate + L-glutamine = D-glucosamine 6-phosphate + L-glutamate. Catalyzes the first step in hexosamine metabolism, converting fructose-6P into glucosamine-6P using glutamine as a nitrogen source. The chain is Glutamine--fructose-6-phosphate aminotransferase [isomerizing] from Symbiobacterium thermophilum (strain DSM 24528 / JCM 14929 / IAM 14863 / T).